The following is a 513-amino-acid chain: Mesoderm induction early response protein 1 (513 aa).

Low complexity predominate over residues 1–16 (MAEPSVESSSPGGSAT). The tract at residues 1 to 174 (MAEPSVESSS…EEESEEDEDY (174 aa)) is disordered. 2 stretches are compositionally biased toward basic and acidic residues: residues 17–36 (SDDHEFDPSADMLVHDFDDE) and 46–63 (EGERNFNSEIEDLNRESD). Residues 82–107 (QEDDDDEDEEEEEEEGEDDDDVDNDD) show a composition bias toward acidic residues. Residues 131-146 (QSSNDDPAPSVASQDP) are compositionally biased toward polar residues. The interval 157–261 (YFDTNSEIEE…IKDNEQALYE (105 aa)) is interaction with HDAC1. Over residues 162-174 (SEIEEESEEDEDY) the composition is skewed to acidic residues. The ELM2 domain occupies 182 to 280 (KEIMVGSMFQ…ESLRRLRFNV (99 aa)). In terms of domain architecture, SANT spans 285-337 (EELSVWTEEECRNFEQGLKVYGKDFHVIQANKVRTRSVGECVAFYYMWKKSER). The interval 368-513 (ESESAASSRA…KLEELETLDD (146 aa)) is disordered. 2 stretches are compositionally biased toward basic and acidic residues: residues 416 to 425 (PSKDEAKPEG) and 463 to 476 (SRSENDFEEKNERP). The span at 483 to 500 (NSNGKESPGSSEFFQEAN) shows a compositional bias: polar residues.

Its subcellular location is the nucleus. In terms of biological role, transcriptional repressor regulating the expression of a number of genes. Probably functions through recruitment of histone deacetylases involved in chromatin silencing. This chain is Mesoderm induction early response protein 1 (MIER1), found in Gallus gallus (Chicken).